Here is a 1391-residue protein sequence, read N- to C-terminus: DNA-directed RNA polymerase subunit beta' (1391 aa).

Zn(2+) contacts are provided by cysteine 72, cysteine 74, cysteine 87, and cysteine 90. The Mg(2+) site is built by aspartate 462, aspartate 464, and aspartate 466. Residues cysteine 816, cysteine 890, cysteine 897, and cysteine 900 each coordinate Zn(2+).

This sequence belongs to the RNA polymerase beta' chain family. The RNAP catalytic core consists of 2 alpha, 1 beta, 1 beta' and 1 omega subunit. When a sigma factor is associated with the core the holoenzyme is formed, which can initiate transcription. It depends on Mg(2+) as a cofactor. Zn(2+) serves as cofactor.

The enzyme catalyses RNA(n) + a ribonucleoside 5'-triphosphate = RNA(n+1) + diphosphate. DNA-dependent RNA polymerase catalyzes the transcription of DNA into RNA using the four ribonucleoside triphosphates as substrates. The sequence is that of DNA-directed RNA polymerase subunit beta' from Neisseria meningitidis serogroup A / serotype 4A (strain DSM 15465 / Z2491).